The chain runs to 809 residues: Phospholipase D alpha 1 (809 aa).

The region spanning 1-125 (MAQILLHGTL…LDGHEIDKWV (125 aa)) is the C2 domain. Residue aspartate 186 coordinates Ca(2+). A PLD phosphodiesterase 1 domain is found at 326–365 (TMFTHHQKIVVVDSALPGGGGSDKRRIVSFVGGLDLCDGR). Catalysis depends on residues histidine 331, lysine 333, and aspartate 338. Residue histidine 331 participates in a 1,2-diacyl-sn-glycero-3-phosphate binding. Ca(2+) contacts are provided by histidine 371 and histidine 405. 2 residues coordinate a 1,2-diacyl-sn-glycero-3-phosphate: glutamine 521 and histidine 660. In terms of domain architecture, PLD phosphodiesterase 2 spans 655–682 (FMIYVHTKMMIVDDEYIIIGSANINQRS). Active-site residues include histidine 660, lysine 662, and aspartate 667. Residue glutamate 721 coordinates Ca(2+).

It belongs to the phospholipase D family. C2-PLD subfamily. Ca(2+) serves as cofactor.

It catalyses the reaction a 1,2-diacyl-sn-glycero-3-phosphocholine + H2O = a 1,2-diacyl-sn-glycero-3-phosphate + choline + H(+). Functionally, hydrolyzes glycerol-phospholipids at the terminal phosphodiesteric bond. Plays an important role in various cellular processes. In Vigna unguiculata (Cowpea), this protein is Phospholipase D alpha 1 (PLD1).